The sequence spans 162 residues: Beta-lactoglobulin-3 (162 aa).

2 cysteine pairs are disulfide-bonded: cysteine 66–cysteine 160 and cysteine 106–cysteine 119.

The protein belongs to the calycin superfamily. Lipocalin family. Monomer.

It is found in the secreted. Lactoglobulin is the primary component of whey, it binds retinol and is probably involved in the transport of that molecule. In Felis catus (Cat), this protein is Beta-lactoglobulin-3 (LGB3).